The following is a 1520-amino-acid chain: Myosin-5 (1520 aa).

A Myosin N-terminal SH3-like domain is found at 7-56 (IVGSHVWVEDPHLAWIDGEVTRIDGINVHVKTKKGKTVVTNVYFPKDTEA). Positions 59–729 (GGVDDMTKLS…QMAELDARRA (671 aa)) constitute a Myosin motor domain. ATP is bound by residues 153–160 (GESGAGKT) and 206–214 (NNNSSRFGK). 4 actin-binding regions span residues 492–526 (LIEKKPGGIISLLDEACMFPKSTHETFSQKLFQTF), 528–551 (EHERFAKPKLSRTDFTISHYAGEV), 586–610 (FHALHEDSSRSSKFSSIGSRFKQQL), and 610–632 (LHSLMESLNGTEPHYIRCIKPNN). IQ domains are found at residues 732-761 (LGNAARVIQRQFRTCMARKNYRSIRNAAIV), 755-784 (IRNAAIVLQSFLRGEIARAVHKKLRIEAAA), 780-809 (IEAAALRVQKNFRRYVDRKSFVTTRSSTIV), 803-832 (TRSSTIVLQTGLRAMIARSEFRLRRQRKAA), 828-857 (QRKAAIVLQAHWRGRQAFSYYTRLQKAAIV), and 851-880 (LQKAAIVTQCAWRCRLARRELRMLKMAARD). Positions 881-1047 (TGALKDAKNK…ESENKVLRQQ (167 aa)) form a coiled coil. The disordered stretch occupies residues 1062–1100 (PKTTIIQRTPEKDTFSNGETTQLQEPETEDRPQKSLNQK). Over residues 1076-1086 (FSNGETTQLQE) the composition is skewed to polar residues. The Dilute domain maps to 1148–1463 (NRIIETIASA…IATMRAEVSD (316 aa)).

The protein belongs to the TRAFAC class myosin-kinesin ATPase superfamily. Myosin family. Plant myosin class XI subfamily. Homodimer. Interacts with MYOB1 and MYOB2. Interacts with PHOX1.

The protein resides in the cytoplasm. In terms of biological role, myosin heavy chain that is required for the cell cycle-regulated transport of various organelles and proteins for their segregation. Functions by binding with its tail domain to receptor proteins on organelles and exerting force with its N-terminal motor domain against actin filaments, thereby transporting its cargo along polarized actin cables. Contributes to the trafficking of Golgi stacks, mitochondria and peroxisomes. Required for development of pavement cells, trichomes, and stigmatic papillae. The sequence is that of Myosin-5 (XI-1) from Arabidopsis thaliana (Mouse-ear cress).